The sequence spans 513 residues: Na(+)/H(+) antiporter NhaB (513 aa).

Transmembrane regions (helical) follow at residues 23–43 (LALI…PFVA), 52–72 (IFTL…LLAI), 97–117 (LLLM…LFIF), 120–140 (LLLS…AAAF), 144–164 (FLDA…FYGI), 202–222 (LMMH…VGEP), 238–258 (FFLR…LTCL), 303–323 (AIIG…VGLI), 348–368 (TESL…AVII), 391–411 (LFYI…VGTI), 447–467 (ATPN…APLI), and 475–495 (VWMA…CVEF).

This sequence belongs to the NhaB Na(+)/H(+) (TC 2.A.34) antiporter family.

The protein localises to the cell inner membrane. The catalysed reaction is 2 Na(+)(in) + 3 H(+)(out) = 2 Na(+)(out) + 3 H(+)(in). Na(+)/H(+) antiporter that extrudes sodium in exchange for external protons. This chain is Na(+)/H(+) antiporter NhaB, found in Escherichia coli O127:H6 (strain E2348/69 / EPEC).